Here is a 114-residue protein sequence, read N- to C-terminus: Fatty acid-binding protein, liver (114 aa).

The protein belongs to the calycin superfamily. Fatty-acid binding protein (FABP) family. In terms of processing, the N-terminus is blocked.

It localises to the cytoplasm. FABPs are thought to play a role in the intracellular transport of long-chain fatty acids and their acyl-CoA esters. The sequence is that of Fatty acid-binding protein, liver from Lethenteron camtschaticum (Japanese lamprey).